Consider the following 94-residue polypeptide: NADH dehydrogenase [ubiquinone] iron-sulfur protein 3, mitochondrial (94 aa).

The protein belongs to the complex I 30 kDa subunit family. In terms of assembly, core subunit of respiratory chain NADH dehydrogenase (Complex I) which is composed of 45 different subunits. Interacts with NDUFAF3. Interacts with RAB5IF. Found in subcomplexes containing subunits NDUFS2, MT-ND1 and NDUFA13.

The protein resides in the mitochondrion inner membrane. The catalysed reaction is a ubiquinone + NADH + 5 H(+)(in) = a ubiquinol + NAD(+) + 4 H(+)(out). Functionally, core subunit of the mitochondrial membrane respiratory chain NADH dehydrogenase (Complex I) which catalyzes electron transfer from NADH through the respiratory chain, using ubiquinone as an electron acceptor. Essential for the catalytic activity and assembly of complex I. This Mesocricetus auratus (Golden hamster) protein is NADH dehydrogenase [ubiquinone] iron-sulfur protein 3, mitochondrial.